The chain runs to 205 residues: Dephospho-CoA kinase (205 aa).

Residues 13–205 (RIGLTGGIAS…KWINTIREIL (193 aa)) enclose the DPCK domain. Position 21–26 (21–26 (ASGKST)) interacts with ATP.

This sequence belongs to the CoaE family.

It is found in the cytoplasm. The catalysed reaction is 3'-dephospho-CoA + ATP = ADP + CoA + H(+). The protein operates within cofactor biosynthesis; coenzyme A biosynthesis; CoA from (R)-pantothenate: step 5/5. Its function is as follows. Catalyzes the phosphorylation of the 3'-hydroxyl group of dephosphocoenzyme A to form coenzyme A. This Prochlorococcus marinus (strain MIT 9312) protein is Dephospho-CoA kinase.